The chain runs to 263 residues: MARGPKKHLKRVAAPKHWMLDKLTGVFAPRPSTGPHKLRECLPLIVFLRNRLKYALTGDEVKKICMQHFLKIDGKVRVDITYPAGFIDVISIEKTGEHFRLVYNTKGCFAVHRITVEEAKYKLCKVRKITVGTKGIPHLVTHDARTIRYPDPLIKVNDTVQIDLGTGKITSFIKFDTGNVCMVIAGANLGRVGVITNRERHPGSCDVVHVKDANGNSFATRISNIFVIGNGNKPWISLPRGKGIRLTIAEERDKRLAAKQSSG.

Positions 42–104 (LPLIVFLRNR…TGEHFRLVYN (63 aa)) constitute an S4 RNA-binding domain.

This sequence belongs to the eukaryotic ribosomal protein eS4 family.

In Homo sapiens (Human), this protein is Small ribosomal subunit protein eS4, Y isoform 2 (RPS4Y2).